We begin with the raw amino-acid sequence, 357 residues long: 3-isopropylmalate dehydrogenase (357 aa).

Residue 76-89 (GPQWDTIDPSLRPE) coordinates NAD(+). Positions 96, 106, 134, and 224 each coordinate substrate. Mg(2+) is bound by residues Asp224, Asp248, and Asp252. Residue 282–294 (GSAPDIAGKGIAN) coordinates NAD(+).

The protein belongs to the isocitrate and isopropylmalate dehydrogenases family. LeuB type 1 subfamily. In terms of assembly, homodimer. The cofactor is Mg(2+). Requires Mn(2+) as cofactor.

It is found in the cytoplasm. The catalysed reaction is (2R,3S)-3-isopropylmalate + NAD(+) = 4-methyl-2-oxopentanoate + CO2 + NADH. Its pathway is amino-acid biosynthesis; L-leucine biosynthesis; L-leucine from 3-methyl-2-oxobutanoate: step 3/4. Catalyzes the oxidation of 3-carboxy-2-hydroxy-4-methylpentanoate (3-isopropylmalate) to 3-carboxy-4-methyl-2-oxopentanoate. The product decarboxylates to 4-methyl-2 oxopentanoate. This is 3-isopropylmalate dehydrogenase from Xanthomonas euvesicatoria pv. vesicatoria (strain 85-10) (Xanthomonas campestris pv. vesicatoria).